Consider the following 335-residue polypeptide: GTPase Obg (335 aa).

Positions 1 to 159 (MQFIDRSEIE…RKLLLELKLL (159 aa)) constitute an Obg domain. The OBG-type G domain maps to 160-328 (AEVGIIGLPN…LLARVWQVLE (169 aa)). GTP-binding positions include 166 to 173 (GLPNAGKS), 191 to 195 (FTTLV), 213 to 216 (DIPG), 280 to 283 (NKAD), and 309 to 311 (SAA). Ser173 and Thr193 together coordinate Mg(2+).

Belongs to the TRAFAC class OBG-HflX-like GTPase superfamily. OBG GTPase family. Monomer. Mg(2+) serves as cofactor.

The protein localises to the cytoplasm. Functionally, an essential GTPase which binds GTP, GDP and possibly (p)ppGpp with moderate affinity, with high nucleotide exchange rates and a fairly low GTP hydrolysis rate. Plays a role in control of the cell cycle, stress response, ribosome biogenesis and in those bacteria that undergo differentiation, in morphogenesis control. This is GTPase Obg from Gloeobacter violaceus (strain ATCC 29082 / PCC 7421).